Here is a 342-residue protein sequence, read N- to C-terminus: 4-amino-5-hydroxymethyl-2-methylpyrimidine phosphate synthase (342 aa).

An N6-(pyridoxal phosphate)lysine modification is found at Lys62. The active site involves His66. 115–118 serves as a coordination point for pyridoxal 5'-phosphate; the sequence is GEFG. Residues 195–199 carry the CCCFC; essential for catalytic activity, may be the site of iron coordination motif; the sequence is CCCFC.

It belongs to the NMT1/THI5 family. In terms of assembly, homodimer. The cofactor is Fe cation.

The enzyme catalyses N(6)-(pyridoxal phosphate)-L-lysyl-[4-amino-5-hydroxymethyl-2-methylpyrimidine phosphate synthase] + L-histidyl-[4-amino-5-hydroxymethyl-2-methylpyrimidine phosphate synthase] + 2 Fe(3+) + 4 H2O = L-lysyl-[4-amino-5-hydroxymethyl-2-methylpyrimidine phosphate synthase] + (2S)-2-amino-5-hydroxy-4-oxopentanoyl-[4-amino-5-hydroxymethyl-2-methylpyrimidine phosphate synthase] + 4-amino-2-methyl-5-(phosphooxymethyl)pyrimidine + 3-oxopropanoate + 2 Fe(2+) + 2 H(+). It functions in the pathway cofactor biosynthesis; thiamine diphosphate biosynthesis. Functionally, responsible for the formation of the pyrimidine heterocycle in the thiamine biosynthesis pathway. Catalyzes the formation of hydroxymethylpyrimidine phosphate (HMP-P) from histidine and pyridoxal phosphate (PLP). The protein uses PLP and the active site histidine to form HMP-P, generating an inactive enzyme. The enzyme can only undergo a single turnover, which suggests it is a suicide enzyme. The chain is 4-amino-5-hydroxymethyl-2-methylpyrimidine phosphate synthase from Aspergillus parasiticus.